A 78-amino-acid chain; its full sequence is Small ribosomal subunit protein bS18 (78 aa).

The protein belongs to the bacterial ribosomal protein bS18 family. In terms of assembly, part of the 30S ribosomal subunit. Forms a tight heterodimer with protein bS6.

Functionally, binds as a heterodimer with protein bS6 to the central domain of the 16S rRNA, where it helps stabilize the platform of the 30S subunit. This is Small ribosomal subunit protein bS18 from Levilactobacillus brevis (strain ATCC 367 / BCRC 12310 / CIP 105137 / JCM 1170 / LMG 11437 / NCIMB 947 / NCTC 947) (Lactobacillus brevis).